Reading from the N-terminus, the 256-residue chain is Thiazole synthase (256 aa).

The active-site Schiff-base intermediate with DXP is lysine 96. 1-deoxy-D-xylulose 5-phosphate-binding positions include glycine 157, 184–185 (AG), and 206–207 (NT).

Belongs to the ThiG family. Homotetramer. Forms heterodimers with either ThiH or ThiS.

The protein localises to the cytoplasm. The catalysed reaction is [ThiS sulfur-carrier protein]-C-terminal-Gly-aminoethanethioate + 2-iminoacetate + 1-deoxy-D-xylulose 5-phosphate = [ThiS sulfur-carrier protein]-C-terminal Gly-Gly + 2-[(2R,5Z)-2-carboxy-4-methylthiazol-5(2H)-ylidene]ethyl phosphate + 2 H2O + H(+). Its pathway is cofactor biosynthesis; thiamine diphosphate biosynthesis. In terms of biological role, catalyzes the rearrangement of 1-deoxy-D-xylulose 5-phosphate (DXP) to produce the thiazole phosphate moiety of thiamine. Sulfur is provided by the thiocarboxylate moiety of the carrier protein ThiS. In vitro, sulfur can be provided by H(2)S. The protein is Thiazole synthase of Bartonella tribocorum (strain CIP 105476 / IBS 506).